The sequence spans 609 residues: MDGFAQDWPNLPRSDNGLHMDQLVGELPTDGGFEPQTRARSNTWPCPRPENFVEPVDELDSTKASNQQLASGDPQQAMQNANAAKKNSSRRNAWGNLSYADLITHAIGSATDKRLTLSQIYEWMVQNVSYFKDKGDSNSSAGWKNSIRHNLSLHNRFMRVQNEGTGKSSWWMLNPEAKPGKSVRRRAASMETSRYEKRRGRAKKRVEALRQGGVVGLNDATPSPSSSVSEGLDHFPESPLHSGGFQLSPDFRQRASSNASSCGRLSPIRALDLEPDWGFSVDYQNTTMTQAQAQQLDQLAGSMAEELKLQSDMLQQQGFSAASGLPTQPPPPYQPPQQPQLPQGYSLNGPGYAAMQPQPQPQGQGQCLLHRSLNCGCLHSAPVRDGLSPNSVTTTMSPAYPNSEPSSDSLNTYSNVLLDGSADNAALLVQHQQQQQQQQQQQRQQLSSGLEGQCLEALNSEQIDEFNLEDFQGGLECNVEELLQQEMRYDGLLDINIPLAAVNTNTNNVILTNNSTNSGSSNAASNSSAGVQLNQLQAQLQLQQQQQQQQQQQQHQQQLLMSNNNNNNNNNNNSNNSLELATQTATANLNARVQYSQPSVVTSPPSWVH.

Disordered regions lie at residues 1 to 89 (MDGF…KNSS) and 181 to 263 (KSVR…SSCG). Thr-43 is subject to Phosphothreonine; by PKB/AKT1. Over residues 62 to 79 (TKASNQQLASGDPQQAMQ) the composition is skewed to polar residues. The span at 80-89 (NANAAKKNSS) shows a compositional bias: low complexity. The fork-head DNA-binding region spans 94–200 (WGNLSYADLI…ETSRYEKRRG (107 aa)). Ser-189 carries the post-translational modification Phosphoserine; by PKB/AKT1. Polar residues-rich tracts occupy residues 220–229 (ATPSPSSSVS) and 254–263 (RASSNASSCG). Ser-257 is subject to Phosphoserine; by PKB/AKT1. Phosphoserine is present on residues Ser-260, Ser-261, and Ser-266. Disordered stretches follow at residues 321-365 (AASG…QGQG) and 384-411 (RDGL…DSLN). Over residues 327–339 (TQPPPPYQPPQQP) the composition is skewed to pro residues. The span at 388 to 397 (SPNSVTTTMS) shows a compositional bias: polar residues.

Interacts with melt.

Its subcellular location is the cytoplasm. The protein resides in the nucleus. Its function is as follows. Transcription factor involved in the regulation of the insulin signaling pathway. Consistently activates both the downstream target Thor\d4EBP and the feedback control target InR. Involved in negative regulation of the cell cycle, modulating cell growth and proliferation. In response to cellular stresses, such as nutrient deprivation or increased levels of reactive oxygen species, foxo is activated and inhibits growth through the action of target genes such as Thor. Foxo activated in the adult fat body can regulate lifespan in adults; an insulin peptide itself may function as one secondary messenger of insulin-regulated aging. Also regulates Lip4, homolog of human acid lipases, thereby acting as a key modulator of lipid metabolism by insulin signaling and integrates insulin responses to glucose and lipid homeostasis. The polypeptide is Forkhead box protein O (Drosophila virilis (Fruit fly)).